A 496-amino-acid polypeptide reads, in one-letter code: Probable fatty acyl-CoA reductase 5 (496 aa).

Belongs to the fatty acyl-CoA reductase family. As to expression, expressed in the endodermal cell layer surrounding the central vasculature in roots. Expressed in floral organs of very young unopened buds and receptacle of siliques.

It carries out the reaction a long-chain fatty acyl-CoA + 2 NADPH + 2 H(+) = a long-chain primary fatty alcohol + 2 NADP(+) + CoA. Functionally, catalyzes the reduction of fatty acyl-CoA to fatty alcohols. Catalyzes specifically the formation of C18:0 fatty alcohol. Provides the fatty alcohols required for synthesis of suberin in roots, seed coat and wound-induced leaf tissue. Provides the fatty alcohols required for synthesis of alkyl hydroxycinnamates in root waxes. The polypeptide is Probable fatty acyl-CoA reductase 5 (Arabidopsis thaliana (Mouse-ear cress)).